The sequence spans 755 residues: SWI/SNF-related matrix-associated actin-dependent regulator of chromatin subfamily A-like protein 1 (755 aa).

The stretch at S7–L27 forms a coiled coil. 2 disordered regions span residues Q26–S91 and S104–S134. The span at P32–S63 shows a compositional bias: polar residues. S63 is subject to Phosphoserine. Positions P139–P217 constitute an HARP domain. In terms of domain architecture, Helicase ATP-binding spans C256 to K412. D269–T276 provides a ligand contact to ATP. Positions D361–H364 match the DESH box motif. In terms of domain architecture, Helicase C-terminal spans Y527–A681.

The protein belongs to the SNF2/RAD54 helicase family. SMARCAL1 subfamily.

The protein resides in the nucleus. Functionally, ATP-dependent annealing helicase that catalyzes the rewinding of the stably unwound DNA. This Drosophila melanogaster (Fruit fly) protein is SWI/SNF-related matrix-associated actin-dependent regulator of chromatin subfamily A-like protein 1 (Marcal1).